Reading from the N-terminus, the 379-residue chain is Pre-mRNA-processing protein 45 (379 aa).

The segment covering 1–10 (MFSNRLPPPK) has biased composition (pro residues). 2 disordered regions span residues 1 to 22 (MFSN…ALSS) and 353 to 379 (SEGA…NYGA). Over residues 368 to 379 (AESDDKSDNYGA) the composition is skewed to basic and acidic residues.

Belongs to the SNW family. Belongs to the CWC complex (or CEF1-associated complex), a spliceosome sub-complex reminiscent of a late-stage spliceosome composed of the U2, U5 and U6 snRNAs and at least BUD13, BUD31, BRR2, CDC40, CEF1, CLF1, CUS1, CWC2, CWC15, CWC21, CWC22, CWC23, CWC24, CWC25, CWC27, ECM2, HSH155, IST3, ISY1, LEA1, MSL1, NTC20, PRP8, PRP9, PRP11, PRP19, PRP21, PRP22, PRP45, PRP46, SLU7, SMB1, SMD1, SMD2, SMD3, SMX2, SMX3, SNT309, SNU114, SPP2, SYF1, SYF2, RSE1 and YJU2. Interacts with CLF1, PRP22 and PRP46. Interacts with SPP382.

It localises to the nucleus. Involved in pre-mRNA splicing. Associated with the spliceosome throughout the splicing reactions, until after the second catalytic step. This Saccharomyces cerevisiae (strain ATCC 204508 / S288c) (Baker's yeast) protein is Pre-mRNA-processing protein 45 (PRP45).